The primary structure comprises 172 residues: uncharacterized protein (172 aa).

Positions 22 to 64 (RSVSSSPAAKQPAPGTVAQSFPPGELALRDETGGRGRGTRGIR) are disordered.

This is an uncharacterized protein from Human cytomegalovirus (strain AD169) (HHV-5).